The chain runs to 481 residues: MSLRYESIESLSQMIQNKTIRPSELIEDTFVNIEKDDTVINSFLALDKEAALEKAKTMDNETPSGKLFGIPMGIKDNIVTKDVETTCASKILEGFNSVYDATVMNKLNAENGILVGKLNMDEFAMGGSTENSFYKKTVNPFDHKAVPGGSSGGSAAAVAASLVPFSLGSDTGGSIRQPASYCGVVGMKPTYGRVSRFGLVAFASSLDQIGPITRNVKDNATVLEVISGLDPHDSTSAPVDNVDFTSQIDKDIKGLRVAVPKEYLGEGVSEEVKASVQAAIKALEKMGATVEEVSLPNSKYGVATYYILSSSEASANLARFDGIRYGYQAEGAQNLEELYKKTRQEGFGDEVKRRIMLGTYALSSGYYDAYYKKAQKVRTLIKQDFERVFENYDIIVGPTAPTTAFDIGAQINDPLTMYANDILTIPINLAGLPSMSIPCGESNGRPIGLQLIGKPFDEKTLYNVAYNYEQIFNMHERYQSL.

Active-site charge relay system residues include Lys75 and Ser150. The active-site Acyl-ester intermediate is the Ser174.

This sequence belongs to the amidase family. GatA subfamily. Heterotrimer of A, B and C subunits.

It catalyses the reaction L-glutamyl-tRNA(Gln) + L-glutamine + ATP + H2O = L-glutaminyl-tRNA(Gln) + L-glutamate + ADP + phosphate + H(+). Its function is as follows. Allows the formation of correctly charged Gln-tRNA(Gln) through the transamidation of misacylated Glu-tRNA(Gln) in organisms which lack glutaminyl-tRNA synthetase. The reaction takes place in the presence of glutamine and ATP through an activated gamma-phospho-Glu-tRNA(Gln). In Macrococcus caseolyticus (strain JCSC5402) (Macrococcoides caseolyticum), this protein is Glutamyl-tRNA(Gln) amidotransferase subunit A.